A 310-amino-acid polypeptide reads, in one-letter code: Urease accessory protein UreD (310 aa).

Belongs to the UreD family. As to quaternary structure, ureD, UreF and UreG form a complex that acts as a GTP-hydrolysis-dependent molecular chaperone, activating the urease apoprotein by helping to assemble the nickel containing metallocenter of UreC. The UreE protein probably delivers the nickel.

Its subcellular location is the cytoplasm. Required for maturation of urease via the functional incorporation of the urease nickel metallocenter. In Synechococcus sp. (strain RCC307), this protein is Urease accessory protein UreD.